Here is a 381-residue protein sequence, read N- to C-terminus: MSTVFKKTSSNGKFSIYLGKRDFVDDVDTVEPIDGVVLVDPEYLEGRKLFVRLTCAFRYGRDDLDVIGLTFRKDLYVQTKQVAPAEPTSIQGPLTALQERLLHKLGVNAYPFTLQMVANLPCSVTLQPGPEDSGKPCGVDFEVKSFCAENLEEKIPKSDSVQLVVRKVQFSALEPGPGPSAQTIRSFFLSSQPLQLQAWMDREVHYHGEAISVHVSINNYTNKVIRRIKIAVVQTTDVVLYSLDKYTKTVFVQEFTETVAANSSFSQTFAVTPLLAANCQKQGLALDGKLKHEDTNLASSTILRPGMNKELLGILVSYKVRVNLVVSYGGILGGLPASDVGVELPVILIHPKPSPGERAVATSSEDIVIEEFMQHNSQTQS.

This sequence belongs to the arrestin family. Homodimer; disulfide-linked in response to retinal illumination. Interacts with CXCR4; the interaction is dependent on the C-terminal phosphorylation of CXCR4 and modulates the calcium ion mobilization activity of CXCR4. Interacts with GPR84. As to expression, inner and outer segments, and the inner plexiform regions of the retina.

The protein localises to the photoreceptor inner segment. The protein resides in the cell projection. It localises to the cilium. It is found in the photoreceptor outer segment. Functionally, may play a role in an as yet undefined retina-specific signal transduction. Could bind to photoactivated-phosphorylated red/green opsins. In Mus musculus (Mouse), this protein is Arrestin-C (Arr3).